A 493-amino-acid polypeptide reads, in one-letter code: Cytochrome P450 monooxygenase esdpG (493 aa).

A helical transmembrane segment spans residues 10-30 (VLGVTWLSALFTLGSLSVFWL). Cys-434 is a binding site for heme.

The protein belongs to the cytochrome P450 family. Heme is required as a cofactor.

It localises to the membrane. The protein operates within secondary metabolite biosynthesis; terpenoid biosynthesis. In terms of biological role, cytochrome P450 monooxygenasee; part of the cluster that mediates the biosynthesis of shearones, diterpenoid pyrones (DPs) which are structurally diverse meroterpenoids consisting of a diterpene linked by a pyrone, and which may exhibit a range of bioactivities. Whitin the pathway, esdpG takes part in the molecular scaffold modification via the hydroxylation at C-11 and C-12 and can transform shearone A into shearone C and shearone B into shearone D. The molecular scaffold is commonly biosynthesized by a series of enzymes including the non-reducing polyketide synthase (NR-PKS) esdpA that generates an alpha-pyrone; the prenyltransferase esdpC that attaches a geranylgeranyl pyrophosphate (GGPP) produced by the GGPP synthase (GGPPS) esdpD onto the pyrone unit; the FAD-dependent monooxygenase esdpE that converts an olefin on the diterpene unit into an epoxide; and the terpene cyclase esdpB that catalyzes the cyclization reactions to give the molecular backbone shearone A. In the modification steps, esdpF oxidizes the hydroxy group to a ketone at C-3 and esdpG then attaches hydroxy groups at both C-11 and C-12. After that, esdpI hydroxylates at C-20 and esdpH hydroxylates at C-6'. The ether bridge is generated by nucleophilic attack of the hydroxy group at C-20 to the carbonyl carbon at C-3. EsdpH can also functions prior to esdpI. The different combinations of these modification enzymes lead to the production of diverse shearone derivatives, shearone I being the end product of the pathway. The alpha-ketoglutarate-dependent dioxygenase esdpJ seems not to be involved in this pathway. This is Cytochrome P450 monooxygenase esdpG from Penicillium shearii (Eupenicillium shearii).